The chain runs to 888 residues: MSLTRFSLCLLLTLLLAAIPVYLASPDPGVRILRSPESTVAPPGDEVVFVCETSLPPEHFEWSYASSRSRFRYLKSGNHNISITHDNDISKLRVVVSLETLGEYRCVAWFGPLAVTSTTARLELAALSGGGGDEGFKGNQAHWRVTAGNTVQWHCGHIESNPAPSWSFYYNDIELPAASTLSDSNGTLLLSNVSVASSGSYRCVATNTASGVRLALPSRLELQVSAEAMPATAPHLLDGQRVRTKVARVGESVLLLCPGVGCPSPTAIWSSPNVPGAIKNNRTRVLPYGLQINELQALDGGTYICYLDNGIRPALKHSIQLLVQQAPRIVLAPSANLTNEGEAMQLECVATGIPEPEIYWLLNGNNSANDSKANPGSNGILILQSVQKRHAGYVQCFARNSLGEDSAGTILQVNPTQIQTGDGGGGSRAYVRPQQHMFGRKQKQQTQMVPPSAPNVTRLSDESVMLRWHVMPNEGLPIKFFKVQYRMLTGTGKSWQTTNENIPYGKERNDYGAVKNFTSSVTGLRPDRRYRFRIMAVYSNNDNKESNTSGKFFLQRGATLAPLAVPSLVDIEEYSQTAVVLHWDLTSDADEDLISGYYAYYRPSASAGEYLKATIDGAKSRSFQISALEPGTIYEFKLQSFSAVAASEFSALKQGRTQRPRVSTTTEPAVHAMDTTTPSHNETFNLNPLLTGTIGGGALLVLLVVSACLCLCRRRSSRGTNQQNKPRLAELREDFVPLNTCSPNKPRTRHLHITLNPLAQQQQQQQQQQQQQQQQQHEEKDTQDNDMSYFQRPPVVYDAEALGFNGMARMSSSSLRRSQRTLERAAAAGGGAGSGTNNNNLNQPTDGSTADSPRLQASNKPGRVILKRARLSSRSENLSSGSLNSVGV.

The N-terminal stretch at 1 to 24 is a signal peptide; it reads MSLTRFSLCLLLTLLLAAIPVYLA. Residues 25 to 688 are Extracellular-facing; the sequence is SPDPGVRILR…SHNETFNLNP (664 aa). 4 consecutive Ig-like C2-type domains span residues 28-123, 134-215, 234-321, and 327-414; these read PGVR…ARLE, EGFK…VRLA, PHLL…SIQL, and PRIV…LQVN. 3 disulfides stabilise this stretch: Cys51/Cys106, Cys155/Cys203, and Cys257/Cys305. Asn80, Asn185, Asn192, Asn281, Asn336, Asn365, Asn369, and Asn455 each carry an N-linked (GlcNAc...) asparagine glycan. A disulfide bridge connects residues Cys348 and Cys396. Fibronectin type-III domains follow at residues 450–557 and 565–660; these read PPSA…LQRG and VPSL…TQRP. Heparin contacts are provided by Arg486 and Lys493. N-linked (GlcNAc...) asparagine glycosylation is present at Asn516. Heparin is bound at residue Arg531. The N-linked (GlcNAc...) asparagine glycan is linked to Asn547. Polar residues predominate over residues 655–667; sequence GRTQRPRVSTTTE. A disordered region spans residues 655–679; it reads GRTQRPRVSTTTEPAVHAMDTTTPS. Asn681 is a glycosylation site (N-linked (GlcNAc...) asparagine). Residues 689 to 709 traverse the membrane as a helical segment; that stretch reads LLTGTIGGGALLVLLVVSACL. Residues 710–888 are Cytoplasmic-facing; it reads CLCRRRSSRG…SSGSLNSVGV (179 aa). Disordered stretches follow at residues 759-789, 812-864, and 869-888; these read AQQQ…DMSY, SSSL…PGRV, and ARLS…SVGV. The segment covering 760–775 has biased composition (low complexity); the sequence is QQQQQQQQQQQQQQQQ. Over residues 843 to 859 the composition is skewed to polar residues; the sequence is QPTDGSTADSPRLQASN. Residues 872 to 888 are compositionally biased toward low complexity; the sequence is SSRSENLSSGSLNSVGV.

Belongs to the immunoglobulin superfamily. IHOG family. As to quaternary structure, homodimer. Heterotetramer; 2 iHog chains bind 2 hh chains when facilitated by heparin, heparin is required to promote high-affinity interactions between hh and iHog.

It localises to the membrane. Functionally, mediates response to the active Hedgehog (Hh) protein signal in embryos, functioning upstream or at the level of patched (ptc). This is Interference hedgehog from Drosophila grimshawi (Hawaiian fruit fly).